A 454-amino-acid chain; its full sequence is tRNA(Ile)-lysidine synthase (454 aa).

Ser31–Ser36 is an ATP binding site.

Belongs to the tRNA(Ile)-lysidine synthase family.

Its subcellular location is the cytoplasm. It catalyses the reaction cytidine(34) in tRNA(Ile2) + L-lysine + ATP = lysidine(34) in tRNA(Ile2) + AMP + diphosphate + H(+). Functionally, ligates lysine onto the cytidine present at position 34 of the AUA codon-specific tRNA(Ile) that contains the anticodon CAU, in an ATP-dependent manner. Cytidine is converted to lysidine, thus changing the amino acid specificity of the tRNA from methionine to isoleucine. The sequence is that of tRNA(Ile)-lysidine synthase from Porphyromonas gingivalis (strain ATCC 33277 / DSM 20709 / CIP 103683 / JCM 12257 / NCTC 11834 / 2561).